The primary structure comprises 201 residues: Pyridoxal 5'-phosphate synthase subunit PdxT (201 aa).

An L-glutamine-binding site is contributed by 50-52 (GES). Residue C82 is the Nucleophile of the active site. Residues R111 and 139-140 (IR) each bind L-glutamine. Catalysis depends on charge relay system residues H180 and E182.

This sequence belongs to the glutaminase PdxT/SNO family. In the presence of PdxS, forms a dodecamer of heterodimers. Only shows activity in the heterodimer.

It catalyses the reaction aldehydo-D-ribose 5-phosphate + D-glyceraldehyde 3-phosphate + L-glutamine = pyridoxal 5'-phosphate + L-glutamate + phosphate + 3 H2O + H(+). The enzyme catalyses L-glutamine + H2O = L-glutamate + NH4(+). The protein operates within cofactor biosynthesis; pyridoxal 5'-phosphate biosynthesis. Catalyzes the hydrolysis of glutamine to glutamate and ammonia as part of the biosynthesis of pyridoxal 5'-phosphate. The resulting ammonia molecule is channeled to the active site of PdxS. The protein is Pyridoxal 5'-phosphate synthase subunit PdxT of Nocardioides sp. (strain ATCC BAA-499 / JS614).